A 332-amino-acid chain; its full sequence is Methylthioribose-1-phosphate isomerase (332 aa).

Substrate contacts are provided by residues 44–46 (RGA), Arg-87, and Gln-192. Residue Asp-233 is the Proton donor of the active site. 243-244 (NK) is a binding site for substrate.

It belongs to the eIF-2B alpha/beta/delta subunits family. MtnA subfamily.

The catalysed reaction is 5-(methylsulfanyl)-alpha-D-ribose 1-phosphate = 5-(methylsulfanyl)-D-ribulose 1-phosphate. It functions in the pathway amino-acid biosynthesis; L-methionine biosynthesis via salvage pathway; L-methionine from S-methyl-5-thio-alpha-D-ribose 1-phosphate: step 1/6. Catalyzes the interconversion of methylthioribose-1-phosphate (MTR-1-P) into methylthioribulose-1-phosphate (MTRu-1-P). This Dehalococcoides mccartyi (strain CBDB1) protein is Methylthioribose-1-phosphate isomerase.